Reading from the N-terminus, the 249-residue chain is tRNA pseudouridine synthase A (249 aa).

D53 (nucleophile) is an active-site residue. Y111 contacts substrate.

It belongs to the tRNA pseudouridine synthase TruA family. Homodimer.

The enzyme catalyses uridine(38/39/40) in tRNA = pseudouridine(38/39/40) in tRNA. Its function is as follows. Formation of pseudouridine at positions 38, 39 and 40 in the anticodon stem and loop of transfer RNAs. This is tRNA pseudouridine synthase A from Streptococcus pneumoniae (strain Taiwan19F-14).